Consider the following 166-residue polypeptide: ATP synthase subunit b (166 aa).

A helical transmembrane segment spans residues 10 to 30; sequence LLFWMVIVFGIVFVILAKYGF.

Belongs to the ATPase B chain family. In terms of assembly, F-type ATPases have 2 components, F(1) - the catalytic core - and F(0) - the membrane proton channel. F(1) has five subunits: alpha(3), beta(3), gamma(1), delta(1), epsilon(1). F(0) has three main subunits: a(1), b(2) and c(10-14). The alpha and beta chains form an alternating ring which encloses part of the gamma chain. F(1) is attached to F(0) by a central stalk formed by the gamma and epsilon chains, while a peripheral stalk is formed by the delta and b chains.

It is found in the cell inner membrane. Functionally, f(1)F(0) ATP synthase produces ATP from ADP in the presence of a proton or sodium gradient. F-type ATPases consist of two structural domains, F(1) containing the extramembraneous catalytic core and F(0) containing the membrane proton channel, linked together by a central stalk and a peripheral stalk. During catalysis, ATP synthesis in the catalytic domain of F(1) is coupled via a rotary mechanism of the central stalk subunits to proton translocation. In terms of biological role, component of the F(0) channel, it forms part of the peripheral stalk, linking F(1) to F(0). This Phocaeicola vulgatus (strain ATCC 8482 / DSM 1447 / JCM 5826 / CCUG 4940 / NBRC 14291 / NCTC 11154) (Bacteroides vulgatus) protein is ATP synthase subunit b.